We begin with the raw amino-acid sequence, 174 residues long: Ribosome maturation factor RimM (174 aa).

The 74-residue stretch at 98 to 171 (EDEYYFHEII…TIKIHIMEGL (74 aa)) folds into the PRC barrel domain.

The protein belongs to the RimM family. In terms of assembly, binds ribosomal protein uS19.

It localises to the cytoplasm. Functionally, an accessory protein needed during the final step in the assembly of 30S ribosomal subunit, possibly for assembly of the head region. Essential for efficient processing of 16S rRNA. May be needed both before and after RbfA during the maturation of 16S rRNA. It has affinity for free ribosomal 30S subunits but not for 70S ribosomes. The sequence is that of Ribosome maturation factor RimM from Bacillus licheniformis (strain ATCC 14580 / DSM 13 / JCM 2505 / CCUG 7422 / NBRC 12200 / NCIMB 9375 / NCTC 10341 / NRRL NRS-1264 / Gibson 46).